A 761-amino-acid chain; its full sequence is Neurotrypsin (761 aa).

Positions 1–21 are cleaved as a signal peptide; it reads MALARCVLAVILGVLSEVARA. A disordered region spans residues 26–88; that stretch reads HSPLHRPHPS…PTISRRCGAG (63 aa). Residues 54–63 show a composition bias toward pro residues; that stretch reads TPRFPLPPRA. Positions 85–157 constitute a Kringle domain; it reads CGAGEPWGNA…GKVDWGYCDC (73 aa). 17 disulfides stabilise this stretch: C85–C157, C101–C141, C130–C155, C191–C255, C204–C265, C235–C245, C298–C361, C311–C371, C341–C351, C411–C475, C424–C485, C455–C465, C505–C636, C547–C563, C651–C717, C680–C694, and C707–C736. A glycan (N-linked (GlcNAc...) asparagine) is linked at N93. SRCR domains lie at 166-267, 273-373, and 386-487; these read IRLV…SCAP, IRLS…TCYP, and IRLM…ICDY. Residues 505–516 form a zymogen activation region region; the sequence is CGLRLLHRRQKR. One can recognise a Peptidase S1 domain in the interval 517 to 760; that stretch reads IIGGNNSLRG…FVPWIKSVTS (244 aa). The N-linked (GlcNAc...) asparagine glycan is linked to N521. The active-site Charge relay system is H562. A glycan (N-linked (GlcNAc...) asparagine) is linked at N569. D612 acts as the Charge relay system in catalysis. Catalysis depends on S711, which acts as the Charge relay system.

Belongs to the peptidase S1 family.

It is found in the secreted. In terms of biological role, plays a role in neuronal plasticity and the proteolytic action may subserve structural reorganizations associated with learning and memory operations. In Rattus norvegicus (Rat), this protein is Neurotrypsin (Prss12).